The chain runs to 251 residues: Triosephosphate isomerase (251 aa).

9 to 11 (NWK) is a binding site for substrate. His-95 serves as the catalytic Electrophile. The active-site Proton acceptor is Glu-167. Substrate contacts are provided by residues Gly-173, Ser-212, and 233–234 (GG).

This sequence belongs to the triosephosphate isomerase family. In terms of assembly, homodimer.

It is found in the cytoplasm. The catalysed reaction is D-glyceraldehyde 3-phosphate = dihydroxyacetone phosphate. It functions in the pathway carbohydrate biosynthesis; gluconeogenesis. The protein operates within carbohydrate degradation; glycolysis; D-glyceraldehyde 3-phosphate from glycerone phosphate: step 1/1. Its function is as follows. Involved in the gluconeogenesis. Catalyzes stereospecifically the conversion of dihydroxyacetone phosphate (DHAP) to D-glyceraldehyde-3-phosphate (G3P). This is Triosephosphate isomerase from Pseudomonas paraeruginosa (strain DSM 24068 / PA7) (Pseudomonas aeruginosa (strain PA7)).